Reading from the N-terminus, the 231-residue chain is 7-cyano-7-deazaguanine synthase (231 aa).

An ATP-binding site is contributed by 8-18; sequence FSGGQDSTTCL. Cys-188, Cys-197, Cys-200, and Cys-203 together coordinate Zn(2+).

It belongs to the QueC family. Zn(2+) is required as a cofactor.

The catalysed reaction is 7-carboxy-7-deazaguanine + NH4(+) + ATP = 7-cyano-7-deazaguanine + ADP + phosphate + H2O + H(+). Its pathway is purine metabolism; 7-cyano-7-deazaguanine biosynthesis. In terms of biological role, catalyzes the ATP-dependent conversion of 7-carboxy-7-deazaguanine (CDG) to 7-cyano-7-deazaguanine (preQ(0)). This is 7-cyano-7-deazaguanine synthase from Escherichia coli (strain ATCC 8739 / DSM 1576 / NBRC 3972 / NCIMB 8545 / WDCM 00012 / Crooks).